The sequence spans 140 residues: Probable lipoprotein LppE (140 aa).

Residues 1–21 (MCNRLVTVTGVAMVVAAGLSA) form the signal peptide. A lipid anchor (N-palmitoyl cysteine) is attached at Cys22. Residue Cys22 is the site of S-diacylglycerol cysteine attachment.

Belongs to the mycobacterial 19 kDa antigen family.

It localises to the cell membrane. The sequence is that of Probable lipoprotein LppE (lppE) from Mycobacterium tuberculosis (strain ATCC 25618 / H37Rv).